A 404-amino-acid polypeptide reads, in one-letter code: Probable tRNA sulfurtransferase (404 aa).

Positions 60-165 constitute a THUMP domain; that stretch reads TAVAESLKQV…EEAAYLSYET (106 aa). ATP is bound by residues 183–184, 208–209, R265, G287, and Q296; these read ML and HF.

This sequence belongs to the ThiI family.

It localises to the cytoplasm. It catalyses the reaction [ThiI sulfur-carrier protein]-S-sulfanyl-L-cysteine + a uridine in tRNA + 2 reduced [2Fe-2S]-[ferredoxin] + ATP + H(+) = [ThiI sulfur-carrier protein]-L-cysteine + a 4-thiouridine in tRNA + 2 oxidized [2Fe-2S]-[ferredoxin] + AMP + diphosphate. It carries out the reaction [ThiS sulfur-carrier protein]-C-terminal Gly-Gly-AMP + S-sulfanyl-L-cysteinyl-[cysteine desulfurase] + AH2 = [ThiS sulfur-carrier protein]-C-terminal-Gly-aminoethanethioate + L-cysteinyl-[cysteine desulfurase] + A + AMP + 2 H(+). The protein operates within cofactor biosynthesis; thiamine diphosphate biosynthesis. Catalyzes the ATP-dependent transfer of a sulfur to tRNA to produce 4-thiouridine in position 8 of tRNAs, which functions as a near-UV photosensor. Also catalyzes the transfer of sulfur to the sulfur carrier protein ThiS, forming ThiS-thiocarboxylate. This is a step in the synthesis of thiazole, in the thiamine biosynthesis pathway. The sulfur is donated as persulfide by IscS. This Streptococcus pneumoniae serotype 19F (strain G54) protein is Probable tRNA sulfurtransferase.